The following is a 318-amino-acid chain: Probable casein kinase I homolog ECU11_1980 (318 aa).

Positions Tyr8–Phe276 constitute a Protein kinase domain. ATP contacts are provided by residues Ile14–Val22 and Lys37. The active-site Proton acceptor is the Asp129.

Belongs to the protein kinase superfamily. CK1 Ser/Thr protein kinase family. Casein kinase I subfamily.

Its subcellular location is the nucleus. It carries out the reaction L-seryl-[protein] + ATP = O-phospho-L-seryl-[protein] + ADP + H(+). The enzyme catalyses L-threonyl-[protein] + ATP = O-phospho-L-threonyl-[protein] + ADP + H(+). Its function is as follows. Involved in DNA repair. May regulate the activity of protein(s) involved in double strand break repair caused by gamma rays. This is Probable casein kinase I homolog ECU11_1980 from Encephalitozoon cuniculi (strain GB-M1) (Microsporidian parasite).